The chain runs to 562 residues: MOB kinase activator-like 2 (562 aa).

A disordered region spans residues 30–50 (KSGSVQGTTATATATGPPSPP). Over residues 31-45 (SGSVQGTTATATATG) the composition is skewed to low complexity. Residues cysteine 170, cysteine 175, histidine 250, and histidine 255 each coordinate Zn(2+). Disordered regions lie at residues 304-378 (DDTS…TASA), 468-523 (NFSN…STTV), and 538-562 (GASA…SSTA). Low complexity-rich tracts occupy residues 305 to 349 (DTSG…NSTS), 357 to 378 (NSQS…TASA), and 471 to 481 (NNNNNNHNLNH). Over residues 482-514 (LNHHHHHHHHQHHHQHHPHGHHGHQGHQGHQGH) the composition is skewed to basic residues. Residues 547–562 (AVSAATGGATSASSTA) are compositionally biased toward low complexity.

The protein belongs to the MOB1/phocein family. In terms of assembly, interacts with and activates trc, also interacts with wts.

The protein localises to the cytoplasm. Its subcellular location is the nucleus. Required for the normal morphogenesis of a variety of polarized outgrowths including epidermal hairs, bristles, arista laterals, and dendrites. The chain is MOB kinase activator-like 2 from Drosophila pseudoobscura pseudoobscura (Fruit fly).